Consider the following 710-residue polypeptide: MNLFTPRSEINPTTTQELLYAYTGPAPVAYGTRTRAVLENIIRPYQYFYKEPNVQRALDIKTGCKEPEDINVEGPSSGFHTASVLKLADNFFRKYRPAMEKLKYWILVKLPKLKYAELSKGRQTYSFIHKRNLPAPIALEETVEFLEQNLRRKIGPTLLSYCQAIADVMELDETTYEGARDPRPWDIQLEEIDSDEEDPLFRQVGREETYTIKFSREELWDQMRTLNTMCKHLERGRLNRRTIATPSMLIRGFVKIVEDAAKEILENVPTSGVPVGGEEKLAKLASKQTFHTAVTGELSGDQEKFNECLDPDAMRLMWTVFLRKLGCPDWIMELFNIPFMVFKSKLADMGEGLVYTKGKLTDRKPLGEMPSEFDDLVRNVVGNSISCRLGMFMGMYNLTSTLLALISIEREELTGSHVESSDDFIHFFNCKTHEEMFKQAETLRLTLKLVGINMSPSKCILISPAGIGEFNSKFHHRDFVGNVATELPALVPNGTNPMTDLAMGLNVIKHSVNTGQMNLCTGALAMRIFNHAYKYAYMALGVTRRTRFMEENAITPLLTNQGASPVHSFSTMHLDEVALRRHLGLLDEETLRRILNPNNPVTQKGDPSMFFRIENKMPQIMEDYSVPSCFKYTLSRNRTIQDKPHKALLNKEERYQRVTSIINKLFPEVLIQEASAPGTVRESLKRRLELVVERSDLDEERKKRILSRIF.

One can recognise a RdRp catalytic domain in the interval A285–I460.

This sequence belongs to the influenza viruses polymerase PB1 family. As to quaternary structure, RNA polymerase is composed of three subunits: PA, PB1 and PB2.

The enzyme catalyses RNA(n) + a ribonucleoside 5'-triphosphate = RNA(n+1) + diphosphate. Functionally, RNA-dependent RNA polymerase which is responsible for replication and transcription of virus RNA segments. The transcription of viral mRNAs occurs by a unique mechanism called cap-snatching. 5' methylated caps of cellular mRNAs are cleaved after 10-13 nucleotides by PA. In turn, these short capped RNAs are used as primers by PB1 for transcription of viral mRNAs. During virus replication, PB1 initiates RNA synthesis and copy vRNA into complementary RNA (cRNA) which in turn serves as a template for the production of more vRNAs. The protein is RNA-directed RNA polymerase catalytic subunit of Amblyomma variegatum (Tropical bont tick).